The primary structure comprises 429 residues: Enolase (429 aa).

Gln-163 lines the (2R)-2-phosphoglycerate pocket. The active-site Proton donor is Glu-205. Mg(2+) contacts are provided by Asp-242, Glu-285, and Asp-312. (2R)-2-phosphoglycerate-binding residues include Lys-337, Arg-366, Ser-367, and Lys-388. The active-site Proton acceptor is the Lys-337.

Belongs to the enolase family. Requires Mg(2+) as cofactor.

It is found in the cytoplasm. The protein resides in the secreted. The protein localises to the cell surface. It carries out the reaction (2R)-2-phosphoglycerate = phosphoenolpyruvate + H2O. Its pathway is carbohydrate degradation; glycolysis; pyruvate from D-glyceraldehyde 3-phosphate: step 4/5. In terms of biological role, catalyzes the reversible conversion of 2-phosphoglycerate (2-PG) into phosphoenolpyruvate (PEP). It is essential for the degradation of carbohydrates via glycolysis. This is Enolase from Azoarcus sp. (strain BH72).